Reading from the N-terminus, the 1759-residue chain is Protein TIC 214 (1759 aa).

Helical transmembrane passes span 23 to 45 (VVVG…LFLL), 64 to 84 (FITG…HLAL), 129 to 149 (IFFQ…SSIF), 172 to 192 (IGWI…LICI), and 221 to 241 (IFVV…PPPF).

It belongs to the TIC214 family. As to quaternary structure, part of the Tic complex.

The protein localises to the plastid. The protein resides in the chloroplast inner membrane. Functionally, involved in protein precursor import into chloroplasts. May be part of an intermediate translocation complex acting as a protein-conducting channel at the inner envelope. This is Protein TIC 214 from Phaseolus vulgaris (Kidney bean).